Reading from the N-terminus, the 337-residue chain is Terpene synthase 4 (337 aa).

Asp94 and Asp98 together coordinate Mg(2+). The D(D/E)XX(D/E) motif motif lies at 94 to 98 (DDIFD). Residue Arg195 coordinates substrate. Residues Asn241, Ser245, and Glu249 each contribute to the Mg(2+) site. The NSE motif signature appears at 241-249 (NDIYSYHRE). Residues 320 to 327 (WSESCTRY) carry the WxxxxxRY motif motif.

Belongs to the terpene synthase family. The cofactor is Mg(2+).

The catalysed reaction is (2E,6E)-farnesyl diphosphate = alpha-muurolene + diphosphate. The enzyme catalyses (2E,6E)-farnesyl diphosphate = (-)-(E)-beta-caryophyllene + diphosphate. Its function is as follows. Terpene synthase that catalyzes the cyclization of farnesyl diphosphate (FPP) into alpha-muurolene, (-)-beta-caryophyllene, and one unidentified sesquiterpene. TPS4 shows only trace monoterpene synthase activity with geranyl diphosphate (GPP) as substrate and produces very small amounts of myrcene. P.polycephalum has a unique biology and these volatile terpenoids could function in internal communication of P.polycephalum, to mark the territory that have been explored, or they may be involved in chemotaxis. This Physarum polycephalum (Slime mold) protein is Terpene synthase 4.